We begin with the raw amino-acid sequence, 222 residues long: Adenylate kinase (222 aa).

Position 2 (Ser-2) is a propeptide, removed in mature form. 2 positions are modified to N-acetylserine: Ser-2 and Ser-3. 16-21 provides a ligand contact to ATP; sequence GAGKGT. The tract at residues 36–65 is NMP; sequence ATGDMLRSQIAKGTQLGLEAKKIMDQGGLV. AMP contacts are provided by residues Thr-37, Arg-42, 63–65, 92–95, and Gln-99; these read GLV and GFPR. Residues 133 to 170 form an LID region; it reads GRLIHPASGRSYHKIFNPPKEDMKDDVTGEALVQRSDD. Residues Arg-134 and 143-144 contribute to the ATP site; that span reads SY. Positions 167 and 178 each coordinate AMP. Gln-206 is an ATP binding site.

The protein belongs to the adenylate kinase family. AK2 subfamily. In terms of assembly, monomer.

It localises to the cytoplasm. It is found in the cytosol. The protein resides in the mitochondrion intermembrane space. The enzyme catalyses AMP + ATP = 2 ADP. Catalyzes the reversible transfer of the terminal phosphate group between ATP and AMP. Plays an important role in cellular energy homeostasis and in adenine nucleotide metabolism. Adenylate kinase activity is critical for regulation of the phosphate utilization and the AMP de novo biosynthesis pathways. The polypeptide is Adenylate kinase (Saccharomyces cerevisiae (strain YJM789) (Baker's yeast)).